A 308-amino-acid chain; its full sequence is Ribosomal RNA small subunit methyltransferase H (308 aa).

Residues 32–34 (GGH), Asp52, Phe78, Asp100, and Gln107 each bind S-adenosyl-L-methionine.

It belongs to the methyltransferase superfamily. RsmH family.

It localises to the cytoplasm. It carries out the reaction cytidine(1402) in 16S rRNA + S-adenosyl-L-methionine = N(4)-methylcytidine(1402) in 16S rRNA + S-adenosyl-L-homocysteine + H(+). Its function is as follows. Specifically methylates the N4 position of cytidine in position 1402 (C1402) of 16S rRNA. This Legionella pneumophila (strain Corby) protein is Ribosomal RNA small subunit methyltransferase H.